Reading from the N-terminus, the 299-residue chain is Probable lipid kinase YegS (299 aa).

One can recognise a DAGKc domain in the interval 2-133 (AEFPASLLIL…IDMAQVNKQT (132 aa)). Residues Thr-40, 66–72 (GDGTINE), and Thr-95 each bind ATP. The Mg(2+) site is built by Leu-215, Asp-218, and Leu-220. Catalysis depends on Glu-271, which acts as the Proton acceptor.

Belongs to the diacylglycerol/lipid kinase family. YegS lipid kinase subfamily. Mg(2+) serves as cofactor. It depends on Ca(2+) as a cofactor.

The protein localises to the cytoplasm. In terms of biological role, probably phosphorylates lipids; the in vivo substrate is unknown. The protein is Probable lipid kinase YegS of Shigella flexneri.